We begin with the raw amino-acid sequence, 419 residues long: Arginine biosynthesis bifunctional protein ArgJ (419 aa).

The substrate site is built by Thr-154, Lys-180, Thr-191, Glu-277, Asn-414, and Thr-419. Thr-191 (nucleophile) is an active-site residue.

The protein belongs to the ArgJ family. Heterotetramer of two alpha and two beta chains.

It is found in the cytoplasm. It carries out the reaction N(2)-acetyl-L-ornithine + L-glutamate = N-acetyl-L-glutamate + L-ornithine. The catalysed reaction is L-glutamate + acetyl-CoA = N-acetyl-L-glutamate + CoA + H(+). Its pathway is amino-acid biosynthesis; L-arginine biosynthesis; L-ornithine and N-acetyl-L-glutamate from L-glutamate and N(2)-acetyl-L-ornithine (cyclic): step 1/1. It functions in the pathway amino-acid biosynthesis; L-arginine biosynthesis; N(2)-acetyl-L-ornithine from L-glutamate: step 1/4. In terms of biological role, catalyzes two activities which are involved in the cyclic version of arginine biosynthesis: the synthesis of N-acetylglutamate from glutamate and acetyl-CoA as the acetyl donor, and of ornithine by transacetylation between N(2)-acetylornithine and glutamate. The polypeptide is Arginine biosynthesis bifunctional protein ArgJ (Thermosynechococcus vestitus (strain NIES-2133 / IAM M-273 / BP-1)).